A 114-amino-acid polypeptide reads, in one-letter code: Iron-sulfur cluster insertion protein ErpA (114 aa).

Residues Cys-42, Cys-106, and Cys-108 each contribute to the iron-sulfur cluster site.

This sequence belongs to the HesB/IscA family. As to quaternary structure, homodimer. It depends on iron-sulfur cluster as a cofactor.

Functionally, required for insertion of 4Fe-4S clusters for at least IspG. The protein is Iron-sulfur cluster insertion protein ErpA of Buchnera aphidicola subsp. Acyrthosiphon pisum (strain APS) (Acyrthosiphon pisum symbiotic bacterium).